A 594-amino-acid chain; its full sequence is MNELIKHKLELLPDSPGCYLHKDKAGTIIYVGKAKNLRNRVRSYFRGSHDTKTELLVSEIADFEFIVTGSNTEALLLEINLIQENMPKYNIKLKDDKSYPFIKITNEPFPRLLITRQIKKNDGLYFGPYPDAYTATEVKKLLDRIFPFKKCKNPVNKVCFYYHLGQCQAHTICHTDKAYWDSLVADVKQFLNGKDDKIIDDLRSKMLEASHNQEFERAAEYRDLISGIATMRTKQRVMSKDLQDRDIFGYFVDKGWMCVQVFFVRQGKLIQRDVNMFPYYNEAEEDFLTYVGQFYSDQRHLIPKEVFIPETIDETLVAAIVPARIVKPQRGEKKQLVALATKNARVSLQQKFDLLEKDLRKTSGAIEHLGQLLGIEKPVRIEAFDNSNIQGTSPVAAMVVFVDGKPSKKDYRKFKIKTVIGPDDYASMREVIYRRYSRVKHEGLQAPDLIIVDGGQGQVKAARDVIEHQLGLSIPVAGLQKNDKHQTHELLFGNPLAVVELPRNSEEFFLLHRIQDEVHRFAITFHRQVRSKNAFSSKLDHIAGLGPKRKQLLLKRFKSMAALEQASLEEIQQLGIPKTVAEALIDHLTSKSDT.

Residues 14-91 (DSPGCYLHKD…IQENMPKYNI (78 aa)) form the GIY-YIG domain. The UVR domain occupies 196–231 (DKIIDDLRSKMLEASHNQEFERAAEYRDLISGIATM).

This sequence belongs to the UvrC family. In terms of assembly, interacts with UvrB in an incision complex.

The protein resides in the cytoplasm. In terms of biological role, the UvrABC repair system catalyzes the recognition and processing of DNA lesions. UvrC both incises the 5' and 3' sides of the lesion. The N-terminal half is responsible for the 3' incision and the C-terminal half is responsible for the 5' incision. The chain is UvrABC system protein C from Streptococcus equi subsp. zooepidemicus (strain H70).